We begin with the raw amino-acid sequence, 282 residues long: Bifunctional protein FolD (282 aa).

NADP(+) is bound by residues 164 to 166, Ile189, and Ile230; that span reads GAS.

This sequence belongs to the tetrahydrofolate dehydrogenase/cyclohydrolase family. In terms of assembly, homodimer.

The enzyme catalyses (6R)-5,10-methylene-5,6,7,8-tetrahydrofolate + NADP(+) = (6R)-5,10-methenyltetrahydrofolate + NADPH. It catalyses the reaction (6R)-5,10-methenyltetrahydrofolate + H2O = (6R)-10-formyltetrahydrofolate + H(+). The protein operates within one-carbon metabolism; tetrahydrofolate interconversion. Its function is as follows. Catalyzes the oxidation of 5,10-methylenetetrahydrofolate to 5,10-methenyltetrahydrofolate and then the hydrolysis of 5,10-methenyltetrahydrofolate to 10-formyltetrahydrofolate. This is Bifunctional protein FolD from Nitratiruptor sp. (strain SB155-2).